Here is a 228-residue protein sequence, read N- to C-terminus: PKHD-type hydroxylase Rmet_3078 (228 aa).

In terms of domain architecture, Fe2OG dioxygenase spans 80–180; the sequence is IVYPPMFNRY…RVGCFFWIQS (101 aa). His98, Asp100, and His161 together coordinate Fe cation. Arg171 is a 2-oxoglutarate binding site.

Fe(2+) is required as a cofactor. L-ascorbate serves as cofactor.

This Cupriavidus metallidurans (strain ATCC 43123 / DSM 2839 / NBRC 102507 / CH34) (Ralstonia metallidurans) protein is PKHD-type hydroxylase Rmet_3078.